The sequence spans 360 residues: MQDRIRKIIHVDMDCFFAAVEMRDNPAYREIALAVGGHEKQRGVISTCNYQARKFGVRSAMPTAQALKLCPQLHVVPGRMSVYKSVSQQIQTIFQRYTSLIEPLSLDEAYLDVSESTAYQGSATLIAQAIRRDIWQELNLTASAGVAPIKFLAKVASDLNKPDGLYVVTPDKVQEMVDSLPLEKIPGVGKVALEKLHQAGLYVGADVRRADYRKLLHQFGRLGASLWKKSHGIDEREVVTERERKSVGVEYTFSQNISTFQECWQVIEQKLYPELDARLSRAHPQRGIIKQGIKVKFADFQQTTIEHVHPALELDYFHELLEQVLTRQQGREIRLLGLSVMLKPELQMKQLSMFPSDGWQ.

The 182-residue stretch at 8 to 189 (IIHVDMDCFF…LPLEKIPGVG (182 aa)) folds into the UmuC domain. Positions 12 and 107 each coordinate Mg(2+). Residue Glu108 is part of the active site.

It belongs to the DNA polymerase type-Y family. In terms of assembly, monomer. Mg(2+) is required as a cofactor.

It localises to the cytoplasm. The catalysed reaction is DNA(n) + a 2'-deoxyribonucleoside 5'-triphosphate = DNA(n+1) + diphosphate. Poorly processive, error-prone DNA polymerase involved in untargeted mutagenesis. Copies undamaged DNA at stalled replication forks, which arise in vivo from mismatched or misaligned primer ends. These misaligned primers can be extended by PolIV. Exhibits no 3'-5' exonuclease (proofreading) activity. May be involved in translesional synthesis, in conjunction with the beta clamp from PolIII. This Vibrio cholerae serotype O1 (strain ATCC 39315 / El Tor Inaba N16961) protein is DNA polymerase IV.